Here is a 276-residue protein sequence, read N- to C-terminus: Halorhodopsin (276 aa).

Positions 1-20 (MTAASTTATTVLQATQSDVL) are excised as a propeptide. A Pyrrolidone carboxylic acid modification is found at Q21. A run of 7 helical transmembrane segments spans residues 31 to 51 (SSIW…VAMG), 61 to 81 (LIWV…AGLA), 109 to 129 (YLTW…LADT), 134 to 154 (LFTA…AALI), 162 to 182 (WVFY…LLVQ), 195 to 215 (IFGT…ILWA), and 220 to 240 (GVAL…DILA). K241 carries the post-translational modification N6-(retinylidene)lysine.

Belongs to the archaeal/bacterial/fungal opsin family. Post-translationally, the covalent binding of retinal to the apoprotein, bacterioopsin, generates bacteriorhodopsin.

It is found in the membrane. Functionally, light-driven chloride pump. This chain is Halorhodopsin (hop), found in Haloarcula marismortui (strain ATCC 43049 / DSM 3752 / JCM 8966 / VKM B-1809) (Halobacterium marismortui).